The chain runs to 141 residues: Large ribosomal subunit protein uL11 (141 aa).

This sequence belongs to the universal ribosomal protein uL11 family. As to quaternary structure, part of the ribosomal stalk of the 50S ribosomal subunit. Interacts with L10 and the large rRNA to form the base of the stalk. L10 forms an elongated spine to which L12 dimers bind in a sequential fashion forming a multimeric L10(L12)X complex. In terms of processing, one or more lysine residues are methylated.

Its function is as follows. Forms part of the ribosomal stalk which helps the ribosome interact with GTP-bound translation factors. The polypeptide is Large ribosomal subunit protein uL11 (Roseiflexus sp. (strain RS-1)).